Here is a 124-residue protein sequence, read N- to C-terminus: Small ribosomal subunit protein uS12 (124 aa).

The interval 1–20 (MATISQLVRNPRKDKVQKTS) is disordered. Asp-89 carries the 3-methylthioaspartic acid modification. Residues 104 to 124 (TSGVTARRKGRSKYGAKRPKA) are disordered. The span at 109–124 (ARRKGRSKYGAKRPKA) shows a compositional bias: basic residues.

The protein belongs to the universal ribosomal protein uS12 family. In terms of assembly, part of the 30S ribosomal subunit. Contacts proteins S8 and S17. May interact with IF1 in the 30S initiation complex.

Functionally, with S4 and S5 plays an important role in translational accuracy. In terms of biological role, interacts with and stabilizes bases of the 16S rRNA that are involved in tRNA selection in the A site and with the mRNA backbone. Located at the interface of the 30S and 50S subunits, it traverses the body of the 30S subunit contacting proteins on the other side and probably holding the rRNA structure together. The combined cluster of proteins S8, S12 and S17 appears to hold together the shoulder and platform of the 30S subunit. The polypeptide is Small ribosomal subunit protein uS12 (Psychromonas ingrahamii (strain DSM 17664 / CCUG 51855 / 37)).